The following is a 320-amino-acid chain: ATP-dependent 6-phosphofructokinase (320 aa).

Gly-12 serves as a coordination point for ATP. Residue 22-26 participates in ADP binding; sequence RGVVR. Residues 73–74 and 103–106 contribute to the ATP site; these read RF and GDGS. Asp-104 contacts Mg(2+). Position 126-128 (126-128) interacts with substrate; the sequence is TID. The active-site Proton acceptor is the Asp-128. An ADP-binding site is contributed by Arg-155. Residues Arg-163 and 170–172 contribute to the substrate site; that span reads MGR. ADP contacts are provided by residues 186–188, Lys-212, and 214–216; these read GCE and KKH. Substrate contacts are provided by residues Glu-223, Arg-244, and 250-253; that span reads HIQR.

Belongs to the phosphofructokinase type A (PFKA) family. ATP-dependent PFK group I subfamily. Prokaryotic clade 'B1' sub-subfamily. In terms of assembly, homotetramer. The cofactor is Mg(2+).

The protein resides in the cytoplasm. The catalysed reaction is beta-D-fructose 6-phosphate + ATP = beta-D-fructose 1,6-bisphosphate + ADP + H(+). It participates in carbohydrate degradation; glycolysis; D-glyceraldehyde 3-phosphate and glycerone phosphate from D-glucose: step 3/4. Its activity is regulated as follows. Allosterically activated by ADP and other diphosphonucleosides, and allosterically inhibited by phosphoenolpyruvate. In terms of biological role, catalyzes the phosphorylation of D-fructose 6-phosphate to fructose 1,6-bisphosphate by ATP, the first committing step of glycolysis. The protein is ATP-dependent 6-phosphofructokinase of Blochmanniella floridana.